Here is a 431-residue protein sequence, read N- to C-terminus: 4-hydroxy-3-methylbut-2-en-1-yl diphosphate synthase (flavodoxin) (431 aa).

[4Fe-4S] cluster is bound by residues Cys-310, Cys-313, Cys-356, and Glu-363.

Belongs to the IspG family. The cofactor is [4Fe-4S] cluster.

The enzyme catalyses (2E)-4-hydroxy-3-methylbut-2-enyl diphosphate + oxidized [flavodoxin] + H2O + 2 H(+) = 2-C-methyl-D-erythritol 2,4-cyclic diphosphate + reduced [flavodoxin]. It functions in the pathway isoprenoid biosynthesis; isopentenyl diphosphate biosynthesis via DXP pathway; isopentenyl diphosphate from 1-deoxy-D-xylulose 5-phosphate: step 5/6. Functionally, converts 2C-methyl-D-erythritol 2,4-cyclodiphosphate (ME-2,4cPP) into 1-hydroxy-2-methyl-2-(E)-butenyl 4-diphosphate. The protein is 4-hydroxy-3-methylbut-2-en-1-yl diphosphate synthase (flavodoxin) of Rhodopseudomonas palustris (strain HaA2).